The primary structure comprises 297 residues: Elongation factor Ts (297 aa).

The tract at residues 82 to 85 (TDFV) is involved in Mg(2+) ion dislocation from EF-Tu.

It belongs to the EF-Ts family.

It is found in the cytoplasm. Associates with the EF-Tu.GDP complex and induces the exchange of GDP to GTP. It remains bound to the aminoacyl-tRNA.EF-Tu.GTP complex up to the GTP hydrolysis stage on the ribosome. In Azoarcus sp. (strain BH72), this protein is Elongation factor Ts.